The chain runs to 451 residues: tRNA-2-methylthio-N(6)-dimethylallyladenosine synthase (451 aa).

Positions 18–134 constitute an MTTase N-terminal domain; that stretch reads ARVYLETYGC…LPNLLDLAES (117 aa). Residues C27, C63, C97, C170, C174, and C177 each contribute to the [4Fe-4S] cluster site. Residues 156–386 form the Radical SAM core domain; it reads RKNGHSAFLA…IALQQKISAE (231 aa). The TRAM domain occupies 389–451; sequence RNDIGNTHEV…TSATLIGNAL (63 aa).

It belongs to the methylthiotransferase family. MiaB subfamily. Monomer. [4Fe-4S] cluster is required as a cofactor.

It localises to the cytoplasm. The enzyme catalyses N(6)-dimethylallyladenosine(37) in tRNA + (sulfur carrier)-SH + AH2 + 2 S-adenosyl-L-methionine = 2-methylsulfanyl-N(6)-dimethylallyladenosine(37) in tRNA + (sulfur carrier)-H + 5'-deoxyadenosine + L-methionine + A + S-adenosyl-L-homocysteine + 2 H(+). Catalyzes the methylthiolation of N6-(dimethylallyl)adenosine (i(6)A), leading to the formation of 2-methylthio-N6-(dimethylallyl)adenosine (ms(2)i(6)A) at position 37 in tRNAs that read codons beginning with uridine. This is tRNA-2-methylthio-N(6)-dimethylallyladenosine synthase from Chloroherpeton thalassium (strain ATCC 35110 / GB-78).